Here is a 276-residue protein sequence, read N- to C-terminus: Lysosome-associated membrane glycoprotein 5 (276 aa).

Positions 1-27 (MDYRACTSALRMPVLLLLLCTFSCNLA) are cleaved as a signal peptide. Over 28-231 (EQEVENLSGL…PTDQRKQLEE (204 aa)) the chain is Extracellular. N-linked (GlcNAc...) asparagine glycans are attached at residues asparagine 33, asparagine 51, and asparagine 100. A helical membrane pass occupies residues 232 to 252 (TLPLILGLTLGVAILIIVAVY). The Cytoplasmic segment spans residues 253-276 (HIHHKMTANQVQIPRDRSLYKHMG).

This sequence belongs to the LAMP family. Glycosylated.

The protein localises to the cytoplasmic vesicle membrane. The protein resides in the cell membrane. It is found in the cell projection. Its subcellular location is the dendrite. It localises to the cytoplasmic vesicle. The protein localises to the secretory vesicle. The protein resides in the synaptic vesicle membrane. It is found in the growth cone membrane. Its subcellular location is the early endosome membrane. It localises to the recycling endosome. The protein localises to the endoplasmic reticulum-Golgi intermediate compartment membrane. The protein resides in the endosome membrane. Plays a role in short-term synaptic plasticity in a subset of GABAergic neurons in the brain. The sequence is that of Lysosome-associated membrane glycoprotein 5 (lamp5) from Xenopus tropicalis (Western clawed frog).